The sequence spans 471 residues: Putative multidrug resistance protein MdtD (471 aa).

Residues M1–Q11 lie on the Periplasmic side of the membrane. A helical transmembrane segment spans residues L12–A32. The Cytoplasmic portion of the chain corresponds to L33–H48. A helical transmembrane segment spans residues M49–A69. Over D70–N76 the chain is Periplasmic. The chain crosses the membrane as a helical span at residues I77–T97. Topologically, residues L98–L101 are cytoplasmic. The chain crosses the membrane as a helical span at residues L102–M124. The Periplasmic portion of the chain corresponds to K125–T137. Residues F138–V158 traverse the membrane as a helical segment. Residues E159–H164 lie on the Cytoplasmic side of the membrane. A helical membrane pass occupies residues W165–M185. The Periplasmic portion of the chain corresponds to P186–D196. Residues L197–S217 traverse the membrane as a helical segment. The Cytoplasmic portion of the chain corresponds to K218 to P224. The helical transmembrane segment at L225–A245 threads the bilayer. Over R246–T262 the chain is Periplasmic. The chain crosses the membrane as a helical span at residues F263–M283. Residues T284–P285 lie on the Cytoplasmic side of the membrane. Residues V286–M306 form a helical membrane-spanning segment. Residues V307–T341 are Periplasmic-facing. Residues L342–L362 form a helical membrane-spanning segment. The Cytoplasmic portion of the chain corresponds to Q363–S395. Residues M396–F416 traverse the membrane as a helical segment. The Periplasmic portion of the chain corresponds to G417 to T430. Residues V431–A451 form a helical membrane-spanning segment. Topologically, residues R452–Q471 are cytoplasmic.

Belongs to the major facilitator superfamily. TCR/Tet family.

It is found in the cell inner membrane. The chain is Putative multidrug resistance protein MdtD from Escherichia coli O139:H28 (strain E24377A / ETEC).